The sequence spans 347 residues: Endothelin receptor type B (347 aa).

Topologically, residues Glu1–Lys7 are extracellular. The chain crosses the membrane as a helical span at residues Tyr8–Ile32. Over Tyr33–Asn43 the chain is Cytoplasmic. Residues Ile44 to Leu69 form a helical membrane-spanning segment. Residues Ala70–Lys81 are Extracellular-facing. Residues Cys80 and Cys161 are joined by a disulfide bond. Residues Leu82–Ile103 form a helical membrane-spanning segment. At Asp104–Thr124 the chain is on the cytoplasmic side. Residues Ala125–Ile149 form a helical membrane-spanning segment. The Extracellular segment spans residues Thr150–Gln177. The helical transmembrane segment at Ala178–Met202 threads the bilayer. The Cytoplasmic portion of the chain corresponds to Thr203–Thr230. A helical transmembrane segment spans residues Val231–Tyr256. The Extracellular segment spans residues Asp257–Ser268. Residues Phe269–Val295 traverse the membrane as a helical segment. The Cytoplasmic portion of the chain corresponds to Ser296 to Ser347. Residues Cys309 and Cys311 are each lipidated (S-palmitoyl cysteine).

It belongs to the G-protein coupled receptor 1 family. Endothelin receptor subfamily. EDNRB sub-subfamily.

It is found in the cell membrane. In terms of biological role, non-specific receptor for endothelin 1, 2, and 3. Mediates its action by association with G proteins that activate a phosphatidylinositol-calcium second messenger system. In Coturnix japonica (Japanese quail), this protein is Endothelin receptor type B (EDNRB).